The following is a 294-amino-acid chain: Homoserine kinase (294 aa).

Residue 83–93 (PLARGLGSSAS) participates in ATP binding.

The protein belongs to the GHMP kinase family. Homoserine kinase subfamily.

It is found in the cytoplasm. The catalysed reaction is L-homoserine + ATP = O-phospho-L-homoserine + ADP + H(+). It participates in amino-acid biosynthesis; L-threonine biosynthesis; L-threonine from L-aspartate: step 4/5. Functionally, catalyzes the ATP-dependent phosphorylation of L-homoserine to L-homoserine phosphate. This chain is Homoserine kinase, found in Oceanobacillus iheyensis (strain DSM 14371 / CIP 107618 / JCM 11309 / KCTC 3954 / HTE831).